The chain runs to 444 residues: Probable D-serine dehydratase (444 aa).

N6-(pyridoxal phosphate)lysine is present on Lys118.

The protein belongs to the serine/threonine dehydratase family. DsdA subfamily. Pyridoxal 5'-phosphate is required as a cofactor.

It catalyses the reaction D-serine = pyruvate + NH4(+). The chain is Probable D-serine dehydratase from Acinetobacter baumannii (strain AB0057).